Consider the following 299-residue polypeptide: MTLSVLSRKDKERVIRRLLLQAPPGEFVNAFDDLCLLIRDEKLMHHQGECAGHQHCQKYSVPLCIDGNPVLLSHHNVMGDYRFFDHQSKLSFRYDLLQNQLKDIQSHGIIRNETEYLRVVVLCALKLYVNDHYPKGNCNVLRKTVKSKEYLIACIEDHNYETGECWNGLWKSKWIFQVNPFLTQVTGRIFVQAHFFRCVNLHIEISKDLKESLEIVNQAQLALSFARLVEEQENKFQAAVLEELQELSNEALRKILRRDLPVTRTLIDWQRILSDLNLVMYPKLGYVIYSRSVLCNWII.

A Phosphoserine modification is found at Ser-290.

This sequence belongs to the F-actin-capping protein alpha subunit family. Component of the F-actin capping complex, composed of a heterodimer of an alpha and a beta subunit. Component of the WASH complex, composed of F-actin-capping protein subunit alpha (CAPZA1, CAPZA2 or CAPZA3), F-actin-capping protein subunit beta (CAPZB), WASHC1, WASHC2, WASHC3, WASHC4 and WASHC5.

F-actin-capping proteins bind in a Ca(2+)-independent manner to the fast growing ends of actin filaments (barbed end) thereby blocking the exchange of subunits at these ends. Unlike other capping proteins (such as gelsolin and severin), these proteins do not sever actin filaments. May play a role in the morphogenesis of spermatid. The polypeptide is F-actin-capping protein subunit alpha-3 (CAPZA3) (Macaca fascicularis (Crab-eating macaque)).